Reading from the N-terminus, the 268-residue chain is Homeobox protein Hox-D12 (268 aa).

The tract at residues 102–124 is disordered; that stretch reads TPDAPTASEERSRTRPPFAPESS. The segment at residues 200–259 is a DNA-binding region (homeobox); it reads ARKKRKPYTKQQIAELENEFLVNEFINRQKRKELSNRLNLSDQQVKIWFQNRRMKKKRVV.

It belongs to the Abd-B homeobox family.

The protein resides in the nucleus. Sequence-specific transcription factor which is part of a developmental regulatory system that provides cells with specific positional identities on the anterior-posterior axis. The sequence is that of Homeobox protein Hox-D12 (Hoxd12) from Mus musculus (Mouse).